The sequence spans 146 residues: Hemoglobin subunit beta-A/B (146 aa).

The residue at position 1 (Gly1) is an N-acetylserine; in variant beta-B. A Globin domain is found at 2–146; it reads FLTAEEKGLV…VANALAHKYH (145 aa). At Ser44 the chain carries Phosphoserine. N6-acetyllysine is present on Lys59. Residue His63 coordinates heme b. An N6-acetyllysine modification is found at Lys82. His92 contacts heme b. An S-nitrosocysteine modification is found at Cys93. Lys144 carries the post-translational modification N6-acetyllysine.

It belongs to the globin family. As to quaternary structure, heterotetramer of two alpha chains and two beta chains. In terms of tissue distribution, red blood cells.

In terms of biological role, involved in oxygen transport from the lung to the various peripheral tissues. The protein is Hemoglobin subunit beta-A/B (HBB) of Felis catus (Cat).